Here is a 190-residue protein sequence, read N- to C-terminus: Shikimate kinase (190 aa).

13 to 18 (GSGKTT) serves as a coordination point for ATP. Threonine 17 provides a ligand contact to Mg(2+). 3 residues coordinate substrate: aspartate 35, arginine 59, and glycine 81. Arginine 119 lines the ATP pocket. Arginine 138 is a binding site for substrate. Glutamine 155 contributes to the ATP binding site.

It belongs to the shikimate kinase family. Monomer. Requires Mg(2+) as cofactor.

It localises to the cytoplasm. The enzyme catalyses shikimate + ATP = 3-phosphoshikimate + ADP + H(+). It participates in metabolic intermediate biosynthesis; chorismate biosynthesis; chorismate from D-erythrose 4-phosphate and phosphoenolpyruvate: step 5/7. Catalyzes the specific phosphorylation of the 3-hydroxyl group of shikimic acid using ATP as a cosubstrate. In Nitrosococcus oceani (strain ATCC 19707 / BCRC 17464 / JCM 30415 / NCIMB 11848 / C-107), this protein is Shikimate kinase.